The chain runs to 415 residues: Gamma-glutamyl phosphate reductase (415 aa).

Belongs to the gamma-glutamyl phosphate reductase family.

The protein resides in the cytoplasm. It catalyses the reaction L-glutamate 5-semialdehyde + phosphate + NADP(+) = L-glutamyl 5-phosphate + NADPH + H(+). Its pathway is amino-acid biosynthesis; L-proline biosynthesis; L-glutamate 5-semialdehyde from L-glutamate: step 2/2. In terms of biological role, catalyzes the NADPH-dependent reduction of L-glutamate 5-phosphate into L-glutamate 5-semialdehyde and phosphate. The product spontaneously undergoes cyclization to form 1-pyrroline-5-carboxylate. This Xylella fastidiosa (strain 9a5c) protein is Gamma-glutamyl phosphate reductase.